A 350-amino-acid polypeptide reads, in one-letter code: Inactive ADP-ribosyltransferase arh2 (350 aa).

This sequence belongs to the ADP-ribosylglycohydrolase family.

It localises to the cytoplasm. Its subcellular location is the myofibril. It is found in the sarcomere. Functionally, required for myofibril assembly and outgrowth of the cardiac chambers in the developing heart. Appears to be catalytically inactive, showing no activity against O-acetyl-ADP-ribose. This Danio rerio (Zebrafish) protein is Inactive ADP-ribosyltransferase arh2 (adprhl1).